Consider the following 368-residue polypeptide: Ferrochelatase (368 aa).

Fe cation is bound by residues His209 and Glu290. The segment at 341-368 (ADLGGGREATGQAAERSRQRALALGAKQ) is disordered.

The protein belongs to the ferrochelatase family.

It localises to the cytoplasm. The catalysed reaction is heme b + 2 H(+) = protoporphyrin IX + Fe(2+). It functions in the pathway porphyrin-containing compound metabolism; protoheme biosynthesis; protoheme from protoporphyrin-IX: step 1/1. Functionally, catalyzes the ferrous insertion into protoporphyrin IX. In Nitrosococcus oceani (strain ATCC 19707 / BCRC 17464 / JCM 30415 / NCIMB 11848 / C-107), this protein is Ferrochelatase.